A 782-amino-acid chain; its full sequence is Structure-specific endonuclease subunit SLX4 (782 aa).

Disordered stretches follow at residues 63-91 (TPKP…MSAM) and 359-425 (KEHE…KKSK). The segment covering 73–84 (GLRKTGSRKSKK) has biased composition (basic residues). Over residues 374–388 (PAQSLTQSQVPSSID) the composition is skewed to polar residues.

This sequence belongs to the SLX4 family. In terms of assembly, forms a heterodimer with SLX1. Phosphorylated in response to DNA damage.

It is found in the nucleus. Functionally, regulatory subunit of the SLX1-SLX4 structure-specific endonuclease that resolves DNA secondary structures generated during DNA repair and recombination. Has endonuclease activity towards branched DNA substrates, introducing single-strand cuts in duplex DNA close to junctions with ss-DNA. The protein is Structure-specific endonuclease subunit SLX4 of Scheffersomyces stipitis (strain ATCC 58785 / CBS 6054 / NBRC 10063 / NRRL Y-11545) (Yeast).